Consider the following 277-residue polypeptide: Myelin proteolipid protein (277 aa).

Residues 2–9 (GLLECCAR) are Cytoplasmic-facing. Residues cysteine 6, cysteine 7, and cysteine 10 are each lipidated (S-palmitoyl cysteine). A helical membrane pass occupies residues 10–36 (CLVGAPFASLVATGLCFFGVALFCGCG). Residues 37–63 (HEALTGTEKLIETYFSKNYQDYEYLIN) are Extracellular-facing. A helical transmembrane segment spans residues 64–88 (VIHAFQYVIYGTASFFFLYGALLLA). The Cytoplasmic portion of the chain corresponds to 89–151 (EGFYTTGAVR…LGKWLGHPDK (63 aa)). Cysteine 109 carries the S-palmitoyl cysteine lipid modification. Serine 114 is modified (phosphoserine). 2 positions are modified to phosphothreonine: threonine 116 and threonine 118. S-palmitoyl cysteine attachment occurs at residues cysteine 139 and cysteine 141. A helical membrane pass occupies residues 152–177 (FVGITYALTVVWLLVFACSAVPVYIY). The Extracellular portion of the chain corresponds to 178–233 (FNTWTTCQSIAFPSKTSASIGSLCADARMYGVLPWNAFPGKVCGSNLLSICKTAEF). Cystine bridges form between cysteine 184–cysteine 228 and cysteine 201–cysteine 220. The O-palmitoyl serine moiety is linked to residue serine 199. A helical membrane pass occupies residues 234–260 (QMTFHLFIAAFVGAAATLVSLLTFMIA). Residues 261 to 277 (ATYNFAVLKLMGRGTKF) are Cytoplasmic-facing.

It belongs to the myelin proteolipid protein family. In terms of assembly, interacts with MAL.

The protein localises to the cell membrane. It localises to the myelin membrane. This is the major myelin protein from the central nervous system. It plays an important role in the formation or maintenance of the multilamellar structure of myelin. The polypeptide is Myelin proteolipid protein (Plp1) (Mus musculus (Mouse)).